The following is a 480-amino-acid chain: Gasdermin-C3 (480 aa).

Residues 1–226 form a triggers pyroptosis region; sequence MGYSFDRASK…TCVILPSATK (226 aa).

It belongs to the gasdermin family. As to quaternary structure, homooligomer; homooligomeric ring-shaped pore complex containing 27-28 subunits when inserted in the membrane. Post-translationally, cleavage by CASP8 relieves autoinhibition by releasing the N-terminal moiety (Gasdermin-C3, N-terminal) that initiates pyroptosis. Palmitoylated.

The protein localises to the cytoplasm. The protein resides in the cytosol. It localises to the cell membrane. With respect to regulation, the full-length protein before cleavage is inactive: intramolecular interactions between N- and C-terminal domains mediate autoinhibition in the absence of activation signal. The intrinsic pyroptosis-inducing activity is carried by the released N-terminal moiety (Gasdermin-C3, N-terminal) following cleavage by caspase CASP8. This form constitutes the precursor of the pore-forming protein: upon cleavage, the released N-terminal moiety (Gasdermin-C3, N-terminal) binds to membranes and forms pores, triggering pyroptosis. Functionally, pore-forming protein that causes membrane permeabilization and pyroptosis. Produced by the cleavage of gasdermin-C3 by caspase CASP8 in response to death signals. After cleavage, moves to the plasma membrane where it strongly binds to membrane inner leaflet lipids. Homooligomerizes within the membrane and forms pores of 10-15 nanometers (nm) of inner diameter, triggering pyroptosis. The sequence is that of Gasdermin-C3 from Mus musculus (Mouse).